Here is a 542-residue protein sequence, read N- to C-terminus: MRVLPATLLVGAASAAVPPLQQVLGRPEEGMSFSKPLHAFQEQLKTLSEDARKLWDEVANYFPDSMDHSPIFSLPKKHTRRPDSHWDHIVRGSDVQKIWVNNADGEKEREIDGKLEAYDLRIKKADPSALGIDPNVKQYTGYLDDNGNDKHLFYWFFESRNDPKNDPVVLWLNGGPGCSSLTGLFMELGPSSIDENIKPVYNDFSWNSNASVIFLDQPVNVGYSYSGSAVSDTVAAGKDVYALLSLFFKQFPEYAEQDFHIAGESYAGHYIPVFASEILAHKNRNINLKSVLIGNGLTDGLTQYGYYRPMGCGEGGYKAVLDEATCESMDNALPRCRSMIESCYNSESAWVCVPASIYCNNALIGPYQRTGQNVYDVRSKCEDESNLCYKGMGYVSEYLNKAEVREAVGAEVGGYDSCNFDINRNFLFHGDWMKPYHRLVPGLLEQIPVLIYAGDADYICNWLGNKAWTEALEWPGQKEYASAELEDLKIEQNEHTGKKIGQVKSHGNFTFMRLYGGGHMVPMDQPEASLEFFNRWLGGEWF.

An N-terminal signal peptide occupies residues methionine 1–valine 17. Positions proline 18 to lysine 123 are excised as a propeptide. Cystine bridges form between cysteine 178-cysteine 418, cysteine 312-cysteine 326, cysteine 336-cysteine 359, cysteine 343-cysteine 352, and cysteine 381-cysteine 388. N-linked (GlcNAc...) asparagine glycosylation is present at asparagine 209. The active site involves serine 265. The active site involves aspartate 457. N-linked (GlcNAc...) asparagine glycosylation occurs at asparagine 508. Histidine 519 is a catalytic residue.

Belongs to the peptidase S10 family.

The protein localises to the vacuole. The catalysed reaction is Release of a C-terminal amino acid with broad specificity.. In terms of biological role, vacuolar carboxypeptidase involved in degradation of small peptides. Digests preferentially peptides containing an aliphatic or hydrophobic residue in P1' position, as well as methionine, leucine or phenylalanine in P1 position of ester substrate. The polypeptide is Carboxypeptidase Y homolog A (cpyA) (Aspergillus oryzae (strain ATCC 42149 / RIB 40) (Yellow koji mold)).